Here is a 253-residue protein sequence, read N- to C-terminus: Sulfate transporter CysZ (253 aa).

Helical transmembrane passes span 31–51 (FVILPLLVNILLMGGAFWWLF), 75–95 (LLWPLAVISVLLVFGYFFSTI), 151–171 (IVLLILYLIPGIGQTVTPVLW), and 222–242 (IPLLNLFIMPVAVCGATAMWV).

The protein belongs to the CysZ family.

The protein localises to the cell inner membrane. Its function is as follows. High affinity, high specificity proton-dependent sulfate transporter, which mediates sulfate uptake. Provides the sulfur source for the cysteine synthesis pathway. The protein is Sulfate transporter CysZ of Escherichia coli O8 (strain IAI1).